A 67-amino-acid polypeptide reads, in one-letter code: Epsilon-conotoxin TxVA (67 aa).

An N-terminal signal peptide occupies residues 1-19 (MRCFPVFIILLLLIASAPC). The propeptide occupies 20–50 (FDARTKTDDDVPLSSLRDNLKRTIRTRLNIR). Residues glutamate 51 and glutamate 54 each carry the 4-carboxyglutamate modification. 2 disulfides stabilise this stretch: cysteine 52/cysteine 58 and cysteine 53/cysteine 59. 6'-bromotryptophan is present on tryptophan 57. An O-linked (GalNAc...) threonine glycan is attached at threonine 60. A 4-hydroxyproline modification is found at proline 63. Positions 64-67 (LTGR) are excised as a propeptide.

Post-translationally, O-glycan consists of the disaccharide Gal-GalNAc. Expressed by the venom duct.

It localises to the secreted. Epsilon-conotoxins act at presynaptic membranes, blocking the calcium channels or G protein-coupled receptors. Causes hyperactivity upon intracranial injection into mice. Causes dorsal fins drooping in fish. The polypeptide is Epsilon-conotoxin TxVA (Conus textile (Cloth-of-gold cone)).